Here is a 290-residue protein sequence, read N- to C-terminus: ATP synthase gamma chain (290 aa).

The protein belongs to the ATPase gamma chain family. In terms of assembly, F-type ATPases have 2 components, CF(1) - the catalytic core - and CF(0) - the membrane proton channel. CF(1) has five subunits: alpha(3), beta(3), gamma(1), delta(1), epsilon(1). CF(0) has three main subunits: a, b and c.

The protein localises to the cell membrane. Functionally, produces ATP from ADP in the presence of a proton gradient across the membrane. The gamma chain is believed to be important in regulating ATPase activity and the flow of protons through the CF(0) complex. The protein is ATP synthase gamma chain of Akkermansia muciniphila (strain ATCC BAA-835 / DSM 22959 / JCM 33894 / BCRC 81048 / CCUG 64013 / CIP 107961 / Muc).